We begin with the raw amino-acid sequence, 71 residues long: ATP synthase F(0) complex subunit e, mitochondrial (71 aa).

Lys34 is modified (N6-acetyllysine). Ser68 bears the Phosphoserine mark.

The protein belongs to the ATPase e subunit family. As to quaternary structure, component of the ATP synthase complex composed at least of ATP5F1A/subunit alpha, ATP5F1B/subunit beta, ATP5MC1/subunit c (homooctomer), MT-ATP6/subunit a, MT-ATP8/subunit 8, ATP5ME/subunit e, ATP5MF/subunit f, ATP5MG/subunit g, ATP5MK/subunit k, ATP5MJ/subunit j, ATP5F1C/subunit gamma, ATP5F1D/subunit delta, ATP5F1E/subunit epsilon, ATP5PF/subunit F6, ATP5PB/subunit b, ATP5PD/subunit d, ATP5PO/subunit OSCP. ATP synthase complex consists of a soluble F(1) head domain (subunits alpha(3) and beta(3)) - the catalytic core - and a membrane F(0) domain - the membrane proton channel (subunits c, a, 8, e, f, g, k and j). These two domains are linked by a central stalk (subunits gamma, delta, and epsilon) rotating inside the F1 region and a stationary peripheral stalk (subunits F6, b, d, and OSCP).

It localises to the mitochondrion. Its subcellular location is the mitochondrion inner membrane. In terms of biological role, subunit e, of the mitochondrial membrane ATP synthase complex (F(1)F(0) ATP synthase or Complex V) that produces ATP from ADP in the presence of a proton gradient across the membrane which is generated by electron transport complexes of the respiratory chain. ATP synthase complex consist of a soluble F(1) head domain - the catalytic core - and a membrane F(1) domain - the membrane proton channel. These two domains are linked by a central stalk rotating inside the F(1) region and a stationary peripheral stalk. During catalysis, ATP synthesis in the catalytic domain of F(1) is coupled via a rotary mechanism of the central stalk subunits to proton translocation. In vivo, can only synthesize ATP although its ATP hydrolase activity can be activated artificially in vitro. Part of the complex F(0) domain. In Sus scrofa (Pig), this protein is ATP synthase F(0) complex subunit e, mitochondrial.